The chain runs to 584 residues: Cytochrome c oxidase subunit 1 (584 aa).

A disordered region spans residues 1 to 25 (MTAVAPRVDGHVAPQRPEPTGHARK). A helical transmembrane segment spans residues 43–63 (IMYIIMSFSFFFLGGLMALLI). Position 87 (H87) interacts with Fe(II)-heme a. 6 consecutive transmembrane segments (helical) span residues 90 to 110 (VMLLLYGTPIVWGFANYVLPL), 122 to 142 (LNAFGFWITTVGGVAMLTGFL), 171 to 191 (MWIVGVGATGIGSVASAINML), 214 to 234 (IFVVSVLALLIFPLLLAAALG), 259 to 279 (LFWFFGHPEVYVLALPFFGIV), and 292 to 312 (FGYVGLIFATLSIGALSMAVW). Positions 265 and 269 each coordinate Cu cation. Positions 265–269 (HPEVY) form a cross-link, 1'-histidyl-3'-tyrosine (His-Tyr). Cu cation-binding residues include H314 and H315. 2 helical membrane-spanning segments follow: residues 316-336 (MFVTGAVLLPFFSFMTFLISV) and 360-380 (MIWSVGFMATFLFGGLTGIML). H398 is a binding site for heme a3. The next 3 membrane-spanning stretches (helical) occupy residues 399 to 419 (FHYTLFGTVVFASCAGVYFWF), 434 to 454 (IHFWLTFVGFHGTFLIQHWVG), and 477 to 497 (ISTVFSFLLGLSVIPFIWNVF). Residue H400 coordinates Fe(II)-heme a. Residues 564 to 584 (HDDINAPELGTAPALASDSSR) form a disordered region.

In terms of assembly, associates with subunits II, III and IV to form cytochrome c oxidase. The 4 subunit cytochrome c oxidase forms a supercomplex with the menaquinol-cytochrome c reductase complex (cytochrome bc1). It depends on Cu(2+) as a cofactor. The cofactor is heme.

The protein resides in the cell membrane. The enzyme catalyses 4 Fe(II)-[cytochrome c] + O2 + 8 H(+)(in) = 4 Fe(III)-[cytochrome c] + 2 H2O + 4 H(+)(out). It participates in energy metabolism; oxidative phosphorylation. Cytochrome c oxidase is the component of the respiratory chain that catalyzes the reduction of oxygen to water. Subunits 1-3 form the functional core of the enzyme complex. CO I is the catalytic subunit of the enzyme. Electrons originating in cytochrome c are transferred via the copper A center of subunit 2 and heme A of subunit 1 to the bimetallic center formed by heme A3 and copper B. This chain is Cytochrome c oxidase subunit 1 (ctaD), found in Corynebacterium glutamicum (strain ATCC 13032 / DSM 20300 / JCM 1318 / BCRC 11384 / CCUG 27702 / LMG 3730 / NBRC 12168 / NCIMB 10025 / NRRL B-2784 / 534).